The primary structure comprises 375 residues: POU domain, class 3, transcription factor 1 (375 aa).

3 disordered regions span residues 1-29 (MAATAQYLPRNNSLPSNPLMHPDSDRMHQ), 56-139 (MSLT…QPLI), and 151-200 (MLGP…PSSD). Polar residues-rich tracts occupy residues 107–117 (VHQQTPSSHAW), 130–139 (PGSNSHQPLI), and 151–160 (MLGPQASSLH). Residues 162-171 (SMRDPLHDDP) are compositionally biased toward basic and acidic residues. The region spanning 194–268 (EDAPSSDDLE…LLNKWLEETD (75 aa)) is the POU-specific domain. Positions 286 to 345 (KRKKRTSIEVGVKGALENHFLKCPKPSAHEITSLADSLQLEKEVVRVWFCNRRQKEKRMT) form a DNA-binding region, homeobox.

Belongs to the POU transcription factor family. Class-3 subfamily.

It localises to the nucleus. Its function is as follows. Acts as a transcription factor. May play a role in neuronal differentiation. The polypeptide is POU domain, class 3, transcription factor 1 (Xenopus tropicalis (Western clawed frog)).